Consider the following 81-residue polypeptide: Costars family protein ABRACL (81 aa).

Belongs to the costars family.

The chain is Costars family protein ABRACL from Salmo salar (Atlantic salmon).